Here is a 186-residue protein sequence, read N- to C-terminus: Putative manganese efflux pump MntP (186 aa).

6 helical membrane-spanning segments follow: residues 3 to 23 (PIAL…AAIG), 39 to 59 (IGII…LIGK), 65 to 85 (VEAW…LHMI), 109 to 129 (CLTA…LAFI), 133 to 153 (IWIA…IGIM), and 166 to 186 (AEIF…YGQL).

The protein belongs to the MntP (TC 9.B.29) family.

It localises to the cell inner membrane. In terms of biological role, probably functions as a manganese efflux pump. This is Putative manganese efflux pump MntP from Alcanivorax borkumensis (strain ATCC 700651 / DSM 11573 / NCIMB 13689 / SK2).